We begin with the raw amino-acid sequence, 161 residues long: Ribosome maturation factor RimP (161 aa).

The protein belongs to the RimP family.

The protein localises to the cytoplasm. Its function is as follows. Required for maturation of 30S ribosomal subunits. The sequence is that of Ribosome maturation factor RimP from Rickettsia rickettsii (strain Iowa).